Consider the following 306-residue polypeptide: N-acetylmuramic acid 6-phosphate etherase (306 aa).

The SIS domain occupies 60–223 (TAAALRGGGR…STGAMVRLGK (164 aa)). Glu-88 functions as the Proton donor in the catalytic mechanism. Glu-119 is an active-site residue.

It belongs to the GCKR-like family. MurNAc-6-P etherase subfamily. Homodimer.

The enzyme catalyses N-acetyl-D-muramate 6-phosphate + H2O = N-acetyl-D-glucosamine 6-phosphate + (R)-lactate. It functions in the pathway amino-sugar metabolism; N-acetylmuramate degradation. In terms of biological role, specifically catalyzes the cleavage of the D-lactyl ether substituent of MurNAc 6-phosphate, producing GlcNAc 6-phosphate and D-lactate. This is N-acetylmuramic acid 6-phosphate etherase from Gloeobacter violaceus (strain ATCC 29082 / PCC 7421).